The chain runs to 356 residues: Probable dual-specificity RNA methyltransferase RlmN (356 aa).

Glu92 serves as the catalytic Proton acceptor. The Radical SAM core domain occupies 98–336; it reads HKYGFSVCVT…CGVRLEHGTD (239 aa). Cysteines 105 and 341 form a disulfide. 3 residues coordinate [4Fe-4S] cluster: Cys112, Cys116, and Cys119. S-adenosyl-L-methionine is bound by residues 164–165, Ser196, 219–221, and Asn297; these read GE and SLH. The S-methylcysteine intermediate role is filled by Cys341.

It belongs to the radical SAM superfamily. RlmN family. [4Fe-4S] cluster serves as cofactor.

The protein resides in the cytoplasm. The enzyme catalyses adenosine(2503) in 23S rRNA + 2 reduced [2Fe-2S]-[ferredoxin] + 2 S-adenosyl-L-methionine = 2-methyladenosine(2503) in 23S rRNA + 5'-deoxyadenosine + L-methionine + 2 oxidized [2Fe-2S]-[ferredoxin] + S-adenosyl-L-homocysteine. It catalyses the reaction adenosine(37) in tRNA + 2 reduced [2Fe-2S]-[ferredoxin] + 2 S-adenosyl-L-methionine = 2-methyladenosine(37) in tRNA + 5'-deoxyadenosine + L-methionine + 2 oxidized [2Fe-2S]-[ferredoxin] + S-adenosyl-L-homocysteine. Specifically methylates position 2 of adenine 2503 in 23S rRNA and position 2 of adenine 37 in tRNAs. In Shouchella clausii (strain KSM-K16) (Alkalihalobacillus clausii), this protein is Probable dual-specificity RNA methyltransferase RlmN.